A 914-amino-acid polypeptide reads, in one-letter code: Protein translocase subunit SecA (914 aa).

ATP is bound by residues Gln87, 105–109 (GEGKT), and Asp500. Zn(2+) contacts are provided by Cys898, Cys900, Cys909, and His910.

It belongs to the SecA family. As to quaternary structure, monomer and homodimer. Part of the essential Sec protein translocation apparatus which comprises SecA, SecYEG and auxiliary proteins SecDF-YajC and YidC. It depends on Zn(2+) as a cofactor.

It localises to the cell inner membrane. Its subcellular location is the cytoplasm. It carries out the reaction ATP + H2O + cellular proteinSide 1 = ADP + phosphate + cellular proteinSide 2.. Functionally, part of the Sec protein translocase complex. Interacts with the SecYEG preprotein conducting channel. Has a central role in coupling the hydrolysis of ATP to the transfer of proteins into and across the cell membrane, serving as an ATP-driven molecular motor driving the stepwise translocation of polypeptide chains across the membrane. This chain is Protein translocase subunit SecA, found in Acidithiobacillus ferrooxidans (strain ATCC 23270 / DSM 14882 / CIP 104768 / NCIMB 8455) (Ferrobacillus ferrooxidans (strain ATCC 23270)).